The following is a 299-amino-acid chain: ATP phosphoribosyltransferase (299 aa).

Belongs to the ATP phosphoribosyltransferase family. Long subfamily. It depends on Mg(2+) as a cofactor.

It localises to the cytoplasm. It carries out the reaction 1-(5-phospho-beta-D-ribosyl)-ATP + diphosphate = 5-phospho-alpha-D-ribose 1-diphosphate + ATP. Its pathway is amino-acid biosynthesis; L-histidine biosynthesis; L-histidine from 5-phospho-alpha-D-ribose 1-diphosphate: step 1/9. Its activity is regulated as follows. Feedback inhibited by histidine. Functionally, catalyzes the condensation of ATP and 5-phosphoribose 1-diphosphate to form N'-(5'-phosphoribosyl)-ATP (PR-ATP). Has a crucial role in the pathway because the rate of histidine biosynthesis seems to be controlled primarily by regulation of HisG enzymatic activity. In Shewanella frigidimarina (strain NCIMB 400), this protein is ATP phosphoribosyltransferase.